Consider the following 547-residue polypeptide: CTP synthase (547 aa).

Positions 1-265 (MARYVFITGG…DQAVLDAFGI (265 aa)) are amidoligase domain. Ser13 contributes to the CTP binding site. Ser13 is a UTP binding site. Residues 14–19 (SLGKGL) and Asp71 each bind ATP. Asp71 and Glu139 together coordinate Mg(2+). Residues 146 to 148 (DIE), 186 to 191 (KTKPTQ), and Lys222 each bind CTP. Residues 186 to 191 (KTKPTQ) and Lys222 contribute to the UTP site. The Glutamine amidotransferase type-1 domain maps to 291–546 (RVAIVGKYTQ…VRAAVEVSRL (256 aa)). Gly353 is an L-glutamine binding site. The active-site Nucleophile; for glutamine hydrolysis is the Cys380. Residues 381–384 (LGMQ), Glu404, and Arg474 each bind L-glutamine. Active-site residues include His519 and Glu521.

This sequence belongs to the CTP synthase family. As to quaternary structure, homotetramer.

The catalysed reaction is UTP + L-glutamine + ATP + H2O = CTP + L-glutamate + ADP + phosphate + 2 H(+). It carries out the reaction L-glutamine + H2O = L-glutamate + NH4(+). The enzyme catalyses UTP + NH4(+) + ATP = CTP + ADP + phosphate + 2 H(+). It functions in the pathway pyrimidine metabolism; CTP biosynthesis via de novo pathway; CTP from UDP: step 2/2. With respect to regulation, allosterically activated by GTP, when glutamine is the substrate; GTP has no effect on the reaction when ammonia is the substrate. The allosteric effector GTP functions by stabilizing the protein conformation that binds the tetrahedral intermediate(s) formed during glutamine hydrolysis. Inhibited by the product CTP, via allosteric rather than competitive inhibition. Catalyzes the ATP-dependent amination of UTP to CTP with either L-glutamine or ammonia as the source of nitrogen. Regulates intracellular CTP levels through interactions with the four ribonucleotide triphosphates. This Cereibacter sphaeroides (strain ATCC 17029 / ATH 2.4.9) (Rhodobacter sphaeroides) protein is CTP synthase.